The sequence spans 267 residues: Interleukin-1 alpha (267 aa).

The propeptide occupies 1-112 (MAKVPDLFED…DPEEGIIKPR (112 aa)). N64 carries N-linked (GlcNAc...) asparagine glycosylation. N6-acetyllysine is present on K82. Residues 82–86 (KKRRL) are nuclear localization signal (NLS). Phosphoserine is present on S87. N-linked (GlcNAc...) asparagine glycosylation is found at N100 and N141.

The protein belongs to the IL-1 family. Monomer. Interacts with TMED10; the interaction mediates the translocation from the cytoplasm into the ERGIC (endoplasmic reticulum-Golgi intermediate compartment) and thereby secretion. Interacts with IL1R1. Interacts with S100A13; this interaction is the first step in the export of IL1A, followed by direct translocation of this complex across the plasma membrane. Post-translationally, acetylated within its nuclear localization sequence, which impacts subcellular localization. Proteolytic processed by CAPN1 in a calcium-dependent manner. Cleavage from 31 kDa precursor to 18 kDa biologically active molecules. In terms of processing, phosphorylated. Phosphorylation greatly enhances susceptibility to digestion and promotes the conversion of pre-IL1A alpha to the biologically active IL1A.

It localises to the nucleus. Its subcellular location is the cytoplasm. It is found in the secreted. Cytokine constitutively present intracellularly in nearly all resting non-hematopoietic cells that plays an important role in inflammation and bridges the innate and adaptive immune systems. After binding to its receptor IL1R1 together with its accessory protein IL1RAP, forms the high affinity interleukin-1 receptor complex. Signaling involves the recruitment of adapter molecules such as MYD88, IRAK1 or IRAK4. In turn, mediates the activation of NF-kappa-B and the three MAPK pathways p38, p42/p44 and JNK pathways. Within the cell, acts as an alarmin and cell death results in its liberation in the extracellular space after disruption of the cell membrane to induce inflammation and alert the host to injury or damage. In addition to its role as a danger signal, which occurs when the cytokine is passively released by cell necrosis, directly senses DNA damage and acts as signal for genotoxic stress without loss of cell integrity. This is Interleukin-1 alpha (IL1A) from Oryctolagus cuniculus (Rabbit).